The primary structure comprises 590 residues: Aspartate--tRNA(Asp/Asn) ligase (590 aa).

E175 contributes to the L-aspartate binding site. Positions 199–202 are aspartate; that stretch reads QQYK. L-aspartate-binding residues include R221 and H450. Position 221–223 (221–223) interacts with ATP; sequence RDE. E484 provides a ligand contact to ATP. R491 contributes to the L-aspartate binding site. An ATP-binding site is contributed by 536 to 539; that stretch reads GVDR.

Belongs to the class-II aminoacyl-tRNA synthetase family. Type 1 subfamily. As to quaternary structure, homodimer.

The protein localises to the cytoplasm. It catalyses the reaction tRNA(Asx) + L-aspartate + ATP = L-aspartyl-tRNA(Asx) + AMP + diphosphate. In terms of biological role, aspartyl-tRNA synthetase with relaxed tRNA specificity since it is able to aspartylate not only its cognate tRNA(Asp) but also tRNA(Asn). Reaction proceeds in two steps: L-aspartate is first activated by ATP to form Asp-AMP and then transferred to the acceptor end of tRNA(Asp/Asn). The polypeptide is Aspartate--tRNA(Asp/Asn) ligase (Rhodopseudomonas palustris (strain HaA2)).